The following is a 151-amino-acid chain: Putative transcriptional regulatory protein TK2151 (151 aa).

This sequence belongs to the Tfx family.

In terms of biological role, putative transcriptional regulator. This is Putative transcriptional regulatory protein TK2151 from Thermococcus kodakarensis (strain ATCC BAA-918 / JCM 12380 / KOD1) (Pyrococcus kodakaraensis (strain KOD1)).